A 499-amino-acid polypeptide reads, in one-letter code: Guanosine-5'-triphosphate,3'-diphosphate pyrophosphatase (499 aa).

The protein belongs to the GppA/Ppx family. GppA subfamily.

It catalyses the reaction guanosine 3'-diphosphate 5'-triphosphate + H2O = guanosine 3',5'-bis(diphosphate) + phosphate + H(+). The protein operates within purine metabolism; ppGpp biosynthesis; ppGpp from GTP: step 2/2. Functionally, catalyzes the conversion of pppGpp to ppGpp. Guanosine pentaphosphate (pppGpp) is a cytoplasmic signaling molecule which together with ppGpp controls the 'stringent response', an adaptive process that allows bacteria to respond to amino acid starvation, resulting in the coordinated regulation of numerous cellular activities. The chain is Guanosine-5'-triphosphate,3'-diphosphate pyrophosphatase from Klebsiella pneumoniae (strain 342).